Consider the following 362-residue polypeptide: MNQVYNFSAGPAMLPAEVLRRAEQELCNWHGLGTSVMEISHRSKEFIAVAAEAEKDLRDLLAIPENYNVLFCHGGARGQFSALPQNLLGDKSTADYIVSGYWSECAAKEAEKYCTPNIIDIRSNTDGITSVKPMNEWALSSDAAYVHYCPNETIEGTAIFEEPDFGDDKIVIADYSSTILSAPIDVSRYGVIYAGAQKNIGPAGITVVIIREDLLGKAHKHIPSILDYTVQVKADSMYNTPPTFAWYLSGMVFKWLKEQGGLQEISKRNLAKAELLYRAIDNSNLYINRVALQNRSIMNVPFQLVNPALDGKFLEEAYAHGLHALKGHKVAGGARASIYNAMSYEGVKALVEFMADFERRNG.

R42 provides a ligand contact to L-glutamate. Pyridoxal 5'-phosphate-binding positions include A76 to R77, W102, T153, D174, and Q197. An N6-(pyridoxal phosphate)lysine modification is found at K198. Residue N239 to T240 coordinates pyridoxal 5'-phosphate.

This sequence belongs to the class-V pyridoxal-phosphate-dependent aminotransferase family. SerC subfamily. As to quaternary structure, homodimer. Pyridoxal 5'-phosphate is required as a cofactor.

The protein resides in the cytoplasm. It carries out the reaction O-phospho-L-serine + 2-oxoglutarate = 3-phosphooxypyruvate + L-glutamate. The catalysed reaction is 4-(phosphooxy)-L-threonine + 2-oxoglutarate = (R)-3-hydroxy-2-oxo-4-phosphooxybutanoate + L-glutamate. It functions in the pathway amino-acid biosynthesis; L-serine biosynthesis; L-serine from 3-phospho-D-glycerate: step 2/3. Its pathway is cofactor biosynthesis; pyridoxine 5'-phosphate biosynthesis; pyridoxine 5'-phosphate from D-erythrose 4-phosphate: step 3/5. In terms of biological role, catalyzes the reversible conversion of 3-phosphohydroxypyruvate to phosphoserine and of 3-hydroxy-2-oxo-4-phosphonooxybutanoate to phosphohydroxythreonine. The protein is Phosphoserine aminotransferase of Xenorhabdus nematophila (strain ATCC 19061 / DSM 3370 / CCUG 14189 / LMG 1036 / NCIMB 9965 / AN6).